The following is a 344-amino-acid chain: Phenylalanine--tRNA ligase alpha subunit (344 aa).

E256 lines the Mg(2+) pocket.

It belongs to the class-II aminoacyl-tRNA synthetase family. Phe-tRNA synthetase alpha subunit type 1 subfamily. In terms of assembly, tetramer of two alpha and two beta subunits. Mg(2+) is required as a cofactor.

It is found in the cytoplasm. It carries out the reaction tRNA(Phe) + L-phenylalanine + ATP = L-phenylalanyl-tRNA(Phe) + AMP + diphosphate + H(+). In Bacillus pumilus (strain SAFR-032), this protein is Phenylalanine--tRNA ligase alpha subunit.